A 440-amino-acid polypeptide reads, in one-letter code: Probable exopolygalacturonase C (440 aa).

The first 21 residues, 1-21, serve as a signal peptide directing secretion; sequence MLITNPALLGILASLAPLALG. Asn-24, Asn-84, Asn-151, and Asn-219 each carry an N-linked (GlcNAc...) asparagine glycan. 2 PbH1 repeats span residues 217–238 and 240–261; these read GTNI…AVNT and SHNI…SIGS. Asp-231 functions as the Proton donor in the catalytic mechanism. His-255 is a catalytic residue. Residue Asn-271 is glycosylated (N-linked (GlcNAc...) asparagine). The stretch at 272 to 293 is one PbH1 3 repeat; that stretch reads ITNLRFEDVTVIDALYAARFKS. N-linked (GlcNAc...) asparagine glycosylation is found at Asn-313 and Asn-350. Residues Cys-389 and Cys-395 are joined by a disulfide bond. N-linked (GlcNAc...) asparagine glycosylation is present at Asn-434.

This sequence belongs to the glycosyl hydrolase 28 family.

It localises to the secreted. It catalyses the reaction [(1-&gt;4)-alpha-D-galacturonosyl](n) + H2O = alpha-D-galacturonate + [(1-&gt;4)-alpha-D-galacturonosyl](n-1). Its function is as follows. Specific in hydrolyzing the terminal glycosidic bond of polygalacturonic acid and oligogalacturonates. The protein is Probable exopolygalacturonase C (pgxC) of Neosartorya fischeri (strain ATCC 1020 / DSM 3700 / CBS 544.65 / FGSC A1164 / JCM 1740 / NRRL 181 / WB 181) (Aspergillus fischerianus).